Here is a 130-residue protein sequence, read N- to C-terminus: Small ribosomal subunit protein uS11 (130 aa).

This sequence belongs to the universal ribosomal protein uS11 family. Part of the 30S ribosomal subunit. Interacts with proteins S7 and S18. Binds to IF-3.

Its function is as follows. Located on the platform of the 30S subunit, it bridges several disparate RNA helices of the 16S rRNA. Forms part of the Shine-Dalgarno cleft in the 70S ribosome. The protein is Small ribosomal subunit protein uS11 of Prochlorococcus marinus (strain MIT 9215).